A 1165-amino-acid polypeptide reads, in one-letter code: Immunoglobulin superfamily member 3 (1165 aa).

An N-terminal signal peptide occupies residues 1–20 (MGTAAGLLLAALLLAGTSWA). Residues 21 to 1095 (QREVNIQQGP…LQSTICANDA (1075 aa)) are Extracellular-facing. Ig-like C2-type domains lie at 22–139 (REVN…AKMN), 144–262 (PDTL…WFPL), 276–386 (PTDK…RGPS), 406–527 (PLRT…WQLL), 545–661 (FAVT…WTQL), 678–800 (PRLQ…EEAS), 810–934 (PDAN…WYKR), and 951–1067 (PALQ…WYLL). 2 disulfide bridges follow: C43/C121 and C168/C246. The EWI motif signature appears at 250-252 (EWI). 6 disulfides stabilise this stretch: C302–C376, C432–C511, C566–C645, C701–C779, C835–C918, and C974–C1051. Residues 1096 to 1116 (LFYLVFFYPFPIFGILIITIL) form a helical membrane-spanning segment. Over 1117-1165 (LVRFRHRPTSKPGEGKNGVPLLWIKEPHLNYSPTCLEPPVLSIHPGTID) the chain is Cytoplasmic.

It is found in the membrane. This is Immunoglobulin superfamily member 3 (igsf3) from Xenopus laevis (African clawed frog).